A 336-amino-acid polypeptide reads, in one-letter code: Serpentine receptor class delta-51 (336 aa).

The next 7 membrane-spanning stretches (helical) occupy residues 14–34 (VYYSLNVTLALSINILLLFIM), 48–68 (YLFNTALFEIIVSLSTYFAQC), 93–113 (CFVTFAVVQCSVVAASFSILL), 133–153 (ATTFIIFSFFPTVMLLFQLLT), 188–208 (AAIIAQSLISLGVYMSPLIAF), 237–257 (GLLIQTLIPFCVYIPPYSYFL), and 275–295 (IFGSFTAFINPLLTFYFVLPY).

Belongs to the nematode receptor-like protein srd family.

The protein resides in the membrane. The polypeptide is Serpentine receptor class delta-51 (srd-51) (Caenorhabditis elegans).